The following is a 150-amino-acid chain: MKVAIANRQRRHPIGTPRLRKVAERILSALGYPDSELSVVITGDLGIRRVNREYLHKDRPTNVISFAMAEGEFGALNPAMLGDVIISADTAAREAEEGGVSFWSRLCFLLLHGILHITGYDHERSGEAEARRMEAKEREIFAILEREGLV.

The Zn(2+) site is built by H112, H116, and H122.

Belongs to the endoribonuclease YbeY family. The cofactor is Zn(2+).

The protein resides in the cytoplasm. Single strand-specific metallo-endoribonuclease involved in late-stage 70S ribosome quality control and in maturation of the 3' terminus of the 16S rRNA. The chain is Endoribonuclease YbeY from Geobacter metallireducens (strain ATCC 53774 / DSM 7210 / GS-15).